We begin with the raw amino-acid sequence, 602 residues long: Sodium- and chloride-dependent GABA transporter 2 (602 aa).

The span at 1–13 shows a compositional bias: polar residues; it reads MDSRVSGTTSNGE. The tract at residues 1–22 is disordered; the sequence is MDSRVSGTTSNGETKPVYPVME. At 1 to 40 the chain is on the cytoplasmic side; sequence MDSRVSGTTSNGETKPVYPVMEKKEEDGTLERGHWNNKME. A run of 3 helical transmembrane segments spans residues 41–61, 68–88, and 121–141; these read FVLS…FPYL, GAFF…VFLL, and IVIL…FYLF. Over 142–206 the chain is Extracellular; the sequence is SSFTIDLPWG…GIQHLGALRW (65 aa). A disulfide bond links Cys-153 and Cys-162. Asn-173 carries an N-linked (GlcNAc...) asparagine glycan. 2 helical membrane-spanning segments follow: residues 207–227 and 233–253; these read ELAL…WKGV and VVYF…IRGV. A glycan (N-linked (GlcNAc...) asparagine) is linked at Asn-269. Helical transmembrane passes span 282–302, 319–339, 366–386, 418–438, 453–473, 490–510, and 528–548; these read AGTQ…ALGS, FLNS…LGFM, VVML…VVLL, VLIL…LTEG, GMCL…VYGA, PLIK…TFLF, and WWGD…IPAW. At 549–602 the chain is on the cytoplasmic side; it reads SLYRLGTLKGPFRERIRQLMCPAEDLPQRNPAGPSAPATPRTSLLRLTELESHC. Thr-587 is subject to Phosphothreonine. Residue Ser-591 is modified to Phosphoserine.

It belongs to the sodium:neurotransmitter symporter (SNF) (TC 2.A.22) family. SLC6A13 subfamily. As to expression, expressed in brain, kidney, lung, liver and testis.

It localises to the cell membrane. The protein localises to the basolateral cell membrane. The catalysed reaction is 4-aminobutanoate(out) + chloride(out) + 2 Na(+)(out) = 4-aminobutanoate(in) + chloride(in) + 2 Na(+)(in). It catalyses the reaction taurine(out) + chloride(out) + 2 Na(+)(out) = taurine(in) + chloride(in) + 2 Na(+)(in). It carries out the reaction beta-alanine(out) + chloride(out) + 2 Na(+)(out) = beta-alanine(in) + chloride(in) + 2 Na(+)(in). The enzyme catalyses hypotaurine(out) + chloride(out) + 2 Na(+)(out) = hypotaurine(in) + chloride(in) + 2 Na(+)(in). Its activity is regulated as follows. GABA transport is inhibited by beta-alanine, 2,3-diaminopropionic acid and SNAP-5114. Mediates sodium- and chloride-dependent transport of gamma-aminobutyric acid (GABA). Mediates transport of beta-alanine. Can also mediate transport of taurine and hypotaurine. This Homo sapiens (Human) protein is Sodium- and chloride-dependent GABA transporter 2 (SLC6A13).